An 836-amino-acid chain; its full sequence is Eukaryotic translation initiation factor 3 subunit C (836 aa).

The disordered stretch occupies residues 1 to 97; that stretch reads MSRFFVSGYD…RRVVKSAKEK (97 aa). Residues 13 to 55 are compositionally biased toward acidic residues; it reads SSSEEEDLLTSSEEELMSSEQESDSEFDDEFANDDDSDSSDSD. The span at 86-97 shows a compositional bias: basic and acidic residues; the sequence is EGRRVVKSAKEK. In terms of domain architecture, PCI spans 586–761; that stretch reads FHMHINLELL…KSINFVSSEH (176 aa). A disordered region spans residues 783–817; that stretch reads DKNEKTASNGHGRKTTQQQQQQQQKEQREQTHDEN. The span at 797-806 shows a compositional bias: low complexity; that stretch reads TTQQQQQQQQ. Residues 807 to 817 show a composition bias toward basic and acidic residues; the sequence is KEQREQTHDEN.

The protein belongs to the eIF-3 subunit C family. As to quaternary structure, component of the eukaryotic translation initiation factor 3 (eIF-3) complex.

It localises to the cytoplasm. Component of the eukaryotic translation initiation factor 3 (eIF-3) complex, which is involved in protein synthesis of a specialized repertoire of mRNAs and, together with other initiation factors, stimulates binding of mRNA and methionyl-tRNAi to the 40S ribosome. The eIF-3 complex specifically targets and initiates translation of a subset of mRNAs involved in cell proliferation. This chain is Eukaryotic translation initiation factor 3 subunit C, found in Meyerozyma guilliermondii (strain ATCC 6260 / CBS 566 / DSM 6381 / JCM 1539 / NBRC 10279 / NRRL Y-324) (Yeast).